The chain runs to 172 residues: Centrin-2 (172 aa).

A compositionally biased stretch (polar residues) spans M1–A14. The segment at M1 to Q31 is disordered. At A2 the chain carries N-acetylalanine. The segment at A2–L25 is required for self-assembly. The residue at position 20 (S20) is a Phosphoserine. K22 is covalently cross-linked (Glycyl lysine isopeptide (Lys-Gly) (interchain with G-Cter in SUMO2)). The residue at position 26 (T26) is a Phosphothreonine. EF-hand domains lie at D28–E63, P64–E99, D101–N136, and L137–Y172. Positions 41, 43, 45, 47, and 52 each coordinate Ca(2+). D150, D152, D154, E156, and E161 together coordinate Ca(2+).

The protein belongs to the centrin family. As to quaternary structure, monomer. Homooligomer. Interacts with CCP110, SFI1. Component of the XPC complex composed of XPC, RAD23B and CETN2. Component of the nuclear pore complex (NPC)-associated TREX-2 complex (transcription and export complex 2), composed of at least GANP, 2 copies of ENY2, PCID2, SEM1/DSS1, and either centrin CETN2 or centrin CETN3. The TREX-2 complex also associates with ALYREF/ALY and with the nucleoporin NUP153. Interacts with USP49. Forms a microtubule-associated complex with POC5, POC1B and FAM161A. Interacts with CCDC15. Ubiquitously expressed in all adult tissues tested, with strongest expression in brain, spleen, kidney, small intestine and ovary. Also expressed in the NIH 3T3 fibroblast cell line and peripheral blood lymphocytes.

The protein resides in the cytoplasm. The protein localises to the cytoskeleton. It localises to the microtubule organizing center. Its subcellular location is the centrosome. It is found in the centriole. The protein resides in the nucleus. The protein localises to the nucleus envelope. It localises to the nuclear pore complex. Its function is as follows. Plays a fundamental role in microtubule organizing center structure and function. Required for centriole duplication and correct spindle formation. Has a role in regulating cytokinesis and genome stability via cooperation with CALM1 and CCP110. Involved in global genome nucleotide excision repair (GG-NER) by acting as component of the XPC complex. Cooperatively with Rad23b appears to stabilize Xpc. In vitro, stimulates DNA binding of the Xpc:Rad23b dimer. In terms of biological role, the XPC complex is proposed to represent the first factor bound at the sites of DNA damage and together with other core recognition factors, Xpa, RPA and the TFIIH complex, is part of the pre-incision (or initial recognition) complex. The XPC complex recognizes a wide spectrum of damaged DNA characterized by distortions of the DNA helix such as single-stranded loops, mismatched bubbles or single-stranded overhangs. The orientation of XPC complex binding appears to be crucial for inducing a productive NER. XPC complex is proposed to recognize and to interact with unpaired bases on the undamaged DNA strand which is followed by recruitment of the TFIIH complex and subsequent scanning for lesions in the opposite strand in a 5'-to-3' direction by the NER machinery. Cyclobutane pyrimidine dimers (CPDs) which are formed upon UV-induced DNA damage esacpe detection by the XPC complex due to a low degree of structural perurbation. Instead they are detected by the UV-DDB complex which in turn recruits and cooperates with the XPC complex in the respective DNA repair. Functionally, as a component of the TREX-2 complex, involved in the export of mRNAs to the cytoplasm through the nuclear pores. This Mus musculus (Mouse) protein is Centrin-2 (Cetn2).